Consider the following 608-residue polypeptide: Glutamine--fructose-6-phosphate aminotransferase [isomerizing] (608 aa).

The Nucleophile; for GATase activity role is filled by Cys-2. The Glutamine amidotransferase type-2 domain occupies 2-217; that stretch reads CGIVGYIGDK…DHEIAIIKKD (216 aa). SIS domains follow at residues 285–424 and 453–598; these read TKED…KKGT and VIQK…VDKP. Lys-603 (for Fru-6P isomerization activity) is an active-site residue.

As to quaternary structure, homodimer.

The protein localises to the cytoplasm. The enzyme catalyses D-fructose 6-phosphate + L-glutamine = D-glucosamine 6-phosphate + L-glutamate. In terms of biological role, catalyzes the first step in hexosamine metabolism, converting fructose-6P into glucosamine-6P using glutamine as a nitrogen source. The chain is Glutamine--fructose-6-phosphate aminotransferase [isomerizing] from Caldanaerobacter subterraneus subsp. tengcongensis (strain DSM 15242 / JCM 11007 / NBRC 100824 / MB4) (Thermoanaerobacter tengcongensis).